The following is a 244-amino-acid chain: Acetoacetate decarboxylase (244 aa).

The active-site Schiff-base intermediate with acetoacetate is Lys115.

It belongs to the ADC family.

It catalyses the reaction acetoacetate + H(+) = acetone + CO2. Functionally, catalyzes the conversion of acetoacetate to acetone and carbon dioxide. In Streptomyces nogalater, this protein is Acetoacetate decarboxylase.